Consider the following 72-residue polypeptide: Large ribosomal subunit protein uL29 (72 aa).

The protein belongs to the universal ribosomal protein uL29 family.

The protein is Large ribosomal subunit protein uL29 of Microcystis aeruginosa (strain NIES-843 / IAM M-2473).